The chain runs to 545 residues: Thermosome subunit beta (545 aa).

The protein belongs to the TCP-1 chaperonin family. As to quaternary structure, forms a Heterooligomeric complex of two stacked eight-membered rings.

In terms of biological role, molecular chaperone; binds unfolded polypeptides in vitro, and has a weak ATPase activity. This chain is Thermosome subunit beta (thsB), found in Thermococcus sp. (strain KS-8).